We begin with the raw amino-acid sequence, 1180 residues long: Phosphatidylinositol 4-kinase (1180 aa).

In terms of domain architecture, PIK helical spans 1–206 (MNKISDTIII…SVYLHSPSTS (206 aa)). Disordered regions lie at residues 15–84 (NEDE…KHKE), 257–327 (ENDH…ENDN), 355–391 (TSPI…NNIN), 768–799 (TISN…IPHS), and 832–894 (AISP…SPFG). Low complexity predominate over residues 38-74 (NNNNNNILTNVNNNKNNTITSSGGSDSSSSSSNNNNN). Residues 75–84 (KIKKSKKHKE) are compositionally biased toward basic residues. Residues 257-270 (ENDHHIENDPKKDI) show a composition bias toward basic and acidic residues. Composition is skewed to low complexity over residues 271 to 325 (NSNN…SGEN), 364 to 391 (NNNN…NNIN), 768 to 793 (TISN…PTLP), and 835 to 879 (PPSQ…SPTN). Positions 895-1164 (ESWQEKIERY…LISYSIDHFK (270 aa)) constitute a PI3K/PI4K catalytic domain. The segment at 901 to 907 (IERYKKI) is G-loop. The catalytic loop stretch occupies residues 1030 to 1038 (QIKDRHNGN). The tract at residues 1049–1073 (HIDFGFILSNSPGNISFESAPFKLT) is activation loop.

This sequence belongs to the PI3/PI4-kinase family. Type III PI4K subfamily.

It catalyses the reaction a 1,2-diacyl-sn-glycero-3-phospho-(1D-myo-inositol) + ATP = a 1,2-diacyl-sn-glycero-3-phospho-(1D-myo-inositol 4-phosphate) + ADP + H(+). Acts on phosphatidylinositol (PtdIns) in the first committed step in the production of the second messenger inositol-1,4,5,-trisphosphate. This chain is Phosphatidylinositol 4-kinase (pikD), found in Dictyostelium discoideum (Social amoeba).